Consider the following 308-residue polypeptide: 3'(2'),5'-bisphosphate nucleotidase 1 (308 aa).

Residue alanine 2 is modified to N-acetylalanine. The Proton acceptor role is filled by aspartate 51. Mg(2+)-binding residues include glutamate 74, aspartate 117, leucine 119, and aspartate 120. Threonine 122 (proton acceptor) is an active-site residue. Threonine 122 bears the Phosphothreonine mark. AMP contacts are provided by threonine 195, histidine 198, glycine 220, and lysine 224. The residue at position 240 (serine 240) is a Phosphoserine. Lysine 244 carries the post-translational modification N6-succinyllysine. Aspartate 247 is a Mg(2+) binding site.

It belongs to the inositol monophosphatase superfamily. Mg(2+) serves as cofactor. As to expression, highly expressed in kidney, liver, pancreas and heart. Detected at lower levels in brain, placenta, lung and skeletal muscle.

The catalysed reaction is adenosine 3',5'-bisphosphate + H2O = AMP + phosphate. The enzyme catalyses adenosine 2',5'-bisphosphate + H2O = AMP + phosphate. It catalyses the reaction 3'-phosphoadenylyl sulfate + H2O = adenosine 5'-phosphosulfate + phosphate. It carries out the reaction 1D-myo-inositol 1,4-bisphosphate + H2O = 1D-myo-inositol 4-phosphate + phosphate. The catalysed reaction is 1D-myo-inositol 1,3,4-trisphosphate + H2O = 1D-myo-inositol 3,4-bisphosphate + phosphate. Its activity is regulated as follows. Is very sensitive to inhibition by Li(+) (IC(50)=0.3 mM for hydrolysis of PAP; IC(50)=0.6 mM for hydrolysis of inositol-1,4-bis-phosphate). Is not affected by high Na(+) concentrations. Functionally, phosphatase that converts 3'(2')-phosphoadenosine 5'-phosphate (PAP) to AMP and inositol 1,4-bisphosphate (Ins(1,4)P2) to inositol 4-phosphate. Is also able to hydrolyze adenosine 3'-phosphate 5'-phosphosulfate (PAPS) to adenosine 5'-phosphosulfate (APS). Probably prevents the toxic accumulation of PAP, a compound which inhibits a variety of proteins, including PAPS-utilizing enzymes such as sulfotransferases, and RNA processing enzymes. Could also play a role in inositol recycling and phosphoinositide metabolism. Is not active on 3'-AMP, inositol-1-phosphate and inositol-1,4,5-triphosphate. This is 3'(2'),5'-bisphosphate nucleotidase 1 (BPNT1) from Homo sapiens (Human).